The sequence spans 116 residues: Ribosome-binding factor A (116 aa).

It belongs to the RbfA family. Monomer. Binds 30S ribosomal subunits, but not 50S ribosomal subunits or 70S ribosomes.

It localises to the cytoplasm. In terms of biological role, one of several proteins that assist in the late maturation steps of the functional core of the 30S ribosomal subunit. Associates with free 30S ribosomal subunits (but not with 30S subunits that are part of 70S ribosomes or polysomes). Required for efficient processing of 16S rRNA. May interact with the 5'-terminal helix region of 16S rRNA. The chain is Ribosome-binding factor A from Streptococcus pyogenes serotype M5 (strain Manfredo).